We begin with the raw amino-acid sequence, 137 residues long: ATP synthase epsilon chain (137 aa).

The protein belongs to the ATPase epsilon chain family. F-type ATPases have 2 components, CF(1) - the catalytic core - and CF(0) - the membrane proton channel. CF(1) has five subunits: alpha(3), beta(3), gamma(1), delta(1), epsilon(1). CF(0) has three main subunits: a, b and c.

Its subcellular location is the cell membrane. Its function is as follows. Produces ATP from ADP in the presence of a proton gradient across the membrane. The polypeptide is ATP synthase epsilon chain (Caldicellulosiruptor saccharolyticus (strain ATCC 43494 / DSM 8903 / Tp8T 6331)).